The primary structure comprises 819 residues: Proteome of basal body protein 15 (819 aa).

Low complexity-rich tracts occupy residues Pro46–Arg59 and Arg572–Thr581. Disordered stretches follow at residues Pro46 to Gly72 and Glu564 to Val590. Residues Tyr546–His580 are a coiled coil.

It is found in the cytoplasm. It localises to the cytoskeleton. The protein localises to the microtubule organizing center. Its subcellular location is the centrosome. The protein resides in the centriole. This is Proteome of basal body protein 15 from Chlamydomonas reinhardtii (Chlamydomonas smithii).